Consider the following 198-residue polypeptide: Transmembrane gamma-carboxyglutamic acid protein 2 (198 aa).

An N-terminal signal peptide occupies residues Met1–Cys17. Positions Leu18–Arg51 are excised as a propeptide. Positions Ala52–Tyr98 constitute a Gla domain. Residues Ala52–Gly111 are Extracellular-facing. An intrachain disulfide couples Cys69 to Cys74. Glu72 carries the post-translational modification 4-carboxyglutamate. Residues Leu112–Trp132 traverse the membrane as a helical segment. The Cytoplasmic portion of the chain corresponds to Tyr133–His198. The tract at residues Pro156–His198 is disordered. The span at Pro162–Leu171 shows a compositional bias: pro residues. The LPXY motif; mediates binding to WW domain-containing proteins signature appears at Leu171–Tyr174. The PPXY motif; mediates binding to WW domain-containing proteins motif lies at Pro188–Tyr191.

In terms of assembly, interacts with NEDD4. Interacts with transcriptional coactivator YAP1. Post-translationally, gamma-carboxyglutamate residues are formed by vitamin K dependent carboxylation. These residues are essential for the binding of calcium.

It is found in the cell membrane. The protein is Transmembrane gamma-carboxyglutamic acid protein 2 (Prrg2) of Mus musculus (Mouse).